A 337-amino-acid chain; its full sequence is Holliday junction branch migration complex subunit RuvB (337 aa).

Residues 1–27 (MIEADRLVHAQPQGTEERDEQIDRAMR) form a disordered region. Residues 4 to 187 (ADRLVHAQPQ…FGIPLRLEFY (184 aa)) are large ATPase domain (RuvB-L). ATP is bound by residues R27, G68, K71, T72, T73, 134–136 (EDY), R177, Y187, and R224. T72 lines the Mg(2+) pocket. The tract at residues 188–258 (NVKDLSSIVT…VAESALDMLD (71 aa)) is small ATPAse domain (RuvB-S). A head domain (RuvB-H) region spans residues 261-337 (VEGFDYMDRK…YQHFNLIQPE (77 aa)). The DNA site is built by R297, R316, and R321.

Belongs to the RuvB family. Homohexamer. Forms an RuvA(8)-RuvB(12)-Holliday junction (HJ) complex. HJ DNA is sandwiched between 2 RuvA tetramers; dsDNA enters through RuvA and exits via RuvB. An RuvB hexamer assembles on each DNA strand where it exits the tetramer. Each RuvB hexamer is contacted by two RuvA subunits (via domain III) on 2 adjacent RuvB subunits; this complex drives branch migration. In the full resolvosome a probable DNA-RuvA(4)-RuvB(12)-RuvC(2) complex forms which resolves the HJ.

It localises to the cytoplasm. The enzyme catalyses ATP + H2O = ADP + phosphate + H(+). Functionally, the RuvA-RuvB-RuvC complex processes Holliday junction (HJ) DNA during genetic recombination and DNA repair, while the RuvA-RuvB complex plays an important role in the rescue of blocked DNA replication forks via replication fork reversal (RFR). RuvA specifically binds to HJ cruciform DNA, conferring on it an open structure. The RuvB hexamer acts as an ATP-dependent pump, pulling dsDNA into and through the RuvAB complex. RuvB forms 2 homohexamers on either side of HJ DNA bound by 1 or 2 RuvA tetramers; 4 subunits per hexamer contact DNA at a time. Coordinated motions by a converter formed by DNA-disengaged RuvB subunits stimulates ATP hydrolysis and nucleotide exchange. Immobilization of the converter enables RuvB to convert the ATP-contained energy into a lever motion, pulling 2 nucleotides of DNA out of the RuvA tetramer per ATP hydrolyzed, thus driving DNA branch migration. The RuvB motors rotate together with the DNA substrate, which together with the progressing nucleotide cycle form the mechanistic basis for DNA recombination by continuous HJ branch migration. Branch migration allows RuvC to scan DNA until it finds its consensus sequence, where it cleaves and resolves cruciform DNA. The polypeptide is Holliday junction branch migration complex subunit RuvB (Shewanella loihica (strain ATCC BAA-1088 / PV-4)).